Here is a 206-residue protein sequence, read N- to C-terminus: Imidazoleglycerol-phosphate dehydratase (206 aa).

The interval 1-21 is disordered; that stretch reads MTTPSTAPTPAPRKAEVSRNT.

It belongs to the imidazoleglycerol-phosphate dehydratase family.

Its subcellular location is the cytoplasm. It carries out the reaction D-erythro-1-(imidazol-4-yl)glycerol 3-phosphate = 3-(imidazol-4-yl)-2-oxopropyl phosphate + H2O. It functions in the pathway amino-acid biosynthesis; L-histidine biosynthesis; L-histidine from 5-phospho-alpha-D-ribose 1-diphosphate: step 6/9. In Polaromonas sp. (strain JS666 / ATCC BAA-500), this protein is Imidazoleglycerol-phosphate dehydratase.